Consider the following 161-residue polypeptide: Vitamin K epoxide reductase complex subunit 1 (161 aa).

The Cytoplasmic segment spans residues 1–9 (MGTTWRSPG). A helical transmembrane segment spans residues 10-29 (RLRLALCLAGLALSLYALHV). Over 30-80 (KAARARNEDYRALCDVGTAISCSRVFSSRWGRGFGLVEHVLGADSILNQSN) the chain is Lumenal. An intrachain disulfide couples C43 to C51. Position 80 (N80) interacts with (S)-warfarin. The helical transmembrane segment at 81–95 (SIFGCMFYTIQLLLG) threads the bilayer. Topologically, residues 96–100 (CLRGR) are cytoplasmic. Residues 101 to 128 (WASILLILSSLVSVAGSLYLAWILFFVL) form a helical membrane-spanning segment. The Lumenal segment spans residues 129 to 131 (YDF). C132 and C135 are oxidised to a cystine. The chain crosses the membrane as a helical span at residues 132 to 153 (CIVCITTYAINAGLMLLSFQKV). Phylloquinone-binding residues include C135 and Y139. Residue Y139 participates in (S)-warfarin binding. Over 154 to 161 (PEHKVKKP) the chain is Cytoplasmic.

This sequence belongs to the VKOR family. As to expression, highly expressed in liver. Detected at lower levels in lung, kidney and testis.

It localises to the endoplasmic reticulum membrane. The catalysed reaction is phylloquinone + [protein]-disulfide + H2O = 2,3-epoxyphylloquinone + [protein]-dithiol. It carries out the reaction phylloquinol + [protein]-disulfide = phylloquinone + [protein]-dithiol. Inhibited by warfarin (coumadin). Warfarin locks VKORC1 in both redox states into the closed conformation. Involved in vitamin K metabolism. Catalytic subunit of the vitamin K epoxide reductase (VKOR) complex which reduces inactive vitamin K 2,3-epoxide to active vitamin K. Vitamin K is required for the gamma-carboxylation of various proteins, including clotting factors, and is required for normal blood coagulation, but also for normal bone development. The sequence is that of Vitamin K epoxide reductase complex subunit 1 (Vkorc1) from Rattus norvegicus (Rat).